Reading from the N-terminus, the 442-residue chain is MLDNFTSSQTTKEFSVSEISNKIKELLENNFGYIKVKGEISGLKIASSGHAYFNLKENTAILACTCWRPILAKIKFPLNDGMEVVISGKLSSYAGNSRYQLSVENLQPAGLGAMVQILNERKARLEKEGLFNKIRKPIPFLPNKIGVITSITGAVIQDIIHRIRERFPTHVIIWPVSVQGENSGNEIAEAIDGFNKLEEANKPDVIIVARGGGSIEDLWSFNDEVLVRATYNSKIPIISAVGHEVDYTLIDLAADKRAPTPTAAAEFAVPVRSILNSTLQSYEKVLVTNTKQLVKNHEQAITNYDKINRYLAHYINHKQQLLDETGFNLLDSLPCLISLKETKLKSFSKERIHPHKIITYKTLELTHKAAYIIKSANNTLKNFEYKLELNSLLLLSLDYHNVLKRGFAIVKGESGNFVSSKTTTEKVLNIQFFDGNIKAVRD.

The protein belongs to the XseA family. In terms of assembly, heterooligomer composed of large and small subunits.

The protein localises to the cytoplasm. The enzyme catalyses Exonucleolytic cleavage in either 5'- to 3'- or 3'- to 5'-direction to yield nucleoside 5'-phosphates.. Its function is as follows. Bidirectionally degrades single-stranded DNA into large acid-insoluble oligonucleotides, which are then degraded further into small acid-soluble oligonucleotides. The chain is Exodeoxyribonuclease 7 large subunit from Rickettsia bellii (strain OSU 85-389).